Consider the following 432-residue polypeptide: Adenylosuccinate synthetase (432 aa).

GTP-binding positions include 13 to 19 and 41 to 43; these read GDEGKGK and GHT. Catalysis depends on D14, which acts as the Proton acceptor. Mg(2+) contacts are provided by D14 and G41. IMP is bound by residues 14–17, 39–42, T130, R144, Q225, T240, and R304; these read DEGK and NAGH. H42 serves as the catalytic Proton donor. Substrate is bound at residue 300-306; that stretch reads AVTGRPR. Residues R306, 332-334, and 415-417 each bind GTP; these read KLD and STG.

The protein belongs to the adenylosuccinate synthetase family. As to quaternary structure, homodimer. It depends on Mg(2+) as a cofactor.

The protein resides in the cytoplasm. The enzyme catalyses IMP + L-aspartate + GTP = N(6)-(1,2-dicarboxyethyl)-AMP + GDP + phosphate + 2 H(+). The protein operates within purine metabolism; AMP biosynthesis via de novo pathway; AMP from IMP: step 1/2. Functionally, plays an important role in the de novo pathway of purine nucleotide biosynthesis. Catalyzes the first committed step in the biosynthesis of AMP from IMP. The chain is Adenylosuccinate synthetase from Histophilus somni (strain 129Pt) (Haemophilus somnus).